Here is a 612-residue protein sequence, read N- to C-terminus: Siderophore iron transporter 1 (612 aa).

Ser5, Ser21, Ser22, Ser36, and Ser41 each carry phosphoserine. A run of 14 helical transmembrane segments spans residues 91-111, 125-145, 159-179, 188-208, 218-238, 249-269, 299-319, 331-351, 365-385, 406-426, 434-453, 464-484, 495-515, and 573-593; these read ISFY…SFQA, FAGH…SAAI, LEAF…MAAS, GSVL…IFMA, LVLG…PRVA, WGIA…LAVY, IIGL…ISLA, FIVM…YEIF, EPTI…FYCW, YISY…GILI, WYFV…MIRY, IMPQ…LTVA, AIVT…GSAI, and ILTS…WFVA.

This sequence belongs to the major facilitator superfamily.

The protein resides in the membrane. Involved in the transport of siderophore iron and so has a role in iron homeostasis. This chain is Siderophore iron transporter 1 (str1), found in Schizosaccharomyces pombe (strain 972 / ATCC 24843) (Fission yeast).